The sequence spans 426 residues: Spermatogenesis-associated protein 2-like protein (426 aa).

Disordered regions lie at residues 204–223 (AQDEEPPPLPPRGTPATYGA), 234–256 (DESSEASLYGEPSPGLDSPPVEL), 269–300 (LWGSGGQPWEPPADDMHRASSPPYGALEEELE), and 316–347 (SRSGDLAPPESPSSPGQASPRHRQAEAAASSA). Phosphoserine is present on residues Ser-318 and Ser-326.

It belongs to the SPATA2 family.

This chain is Spermatogenesis-associated protein 2-like protein, found in Mus musculus (Mouse).